Consider the following 329-residue polypeptide: ANRNEKLDFLGEGQFATVYKARDKNTNQIVAIKKIKLGHRSEAKDGINRTALREIKLLQELSHPNIIGLLDAFGHKSNISLVFDFMETDLEVIIKDNSLVLTPSHIKAYMLMTLQGLEYLHQHWILHRDLKPNNLLLDENGVLKLADFGLAKSFGSPNWAYTHQVVTRWYRAPELLFGARMYGVGVDMWAVGCILAELLLRVPFLPGDSDLDQLTRIFETLGTPTEEQWPDMCSLPDYVTFKSFPGIPLQHIFIAAGDDLLELIQGLFLFNPCTRITASQALRTKYFSNRPGPTPGCQLPRPNCPVEALKEQSNPAMATKRKRAEALEQ.

The 284-residue stretch at 4–287 folds into the Protein kinase domain; the sequence is NEKLDFLGEG…ASQALRTKYF (284 aa). ATP contacts are provided by residues 10–18 and Lys33; that span reads LGEGQFATV. The Proton acceptor role is filled by Asp129. Residue Ser156 is modified to Phosphoserine; by CDK1 and CDK2. Residue Thr162 is modified to Phosphothreonine. The tract at residues 309-329 is disordered; the sequence is LKEQSNPAMATKRKRAEALEQ. Ser313 carries the phosphoserine modification.

Belongs to the protein kinase superfamily. CMGC Ser/Thr protein kinase family. CDC2/CDKX subfamily. Associates primarily with cyclin-H (CCNH) and MAT1 to form the CAK complex. CAK can further associate with the core-TFIIH to form the TFIIH basal transcription factor; this complex is sensitive to UV light. The CAK complex binds to p53/TP53 in response to DNA damage. Interacts with CDK2, SF1/NR5A1, PUF60 and PRKCI. Interacts with HINT1. Post-translationally, phosphorylation of Ser-156 during mitosis inactivates the enzyme. Phosphorylation of Thr-162 is required for activity. Phosphorylated at Ser-156 and Thr-162 by CDK2.

It is found in the nucleus. It localises to the cytoplasm. The protein localises to the perinuclear region. The catalysed reaction is L-seryl-[protein] + ATP = O-phospho-L-seryl-[protein] + ADP + H(+). It catalyses the reaction L-threonyl-[protein] + ATP = O-phospho-L-threonyl-[protein] + ADP + H(+). It carries out the reaction [DNA-directed RNA polymerase] + ATP = phospho-[DNA-directed RNA polymerase] + ADP + H(+). With respect to regulation, phosphorylation at Thr-162 is required for enzymatic activity. The association of p53/TP53 to the CAK complex in response to DNA damage reduces kinase activity toward CDK2 and RNA polymerase II repetitive C-terminal domain (CTD), thus stopping cell cycle progression. Its function is as follows. Serine/threonine kinase involved in cell cycle control and in RNA polymerase II-mediated RNA transcription. Cyclin-dependent kinases (CDKs) are activated by the binding to a cyclin and mediate the progression through the cell cycle. Each different complex controls a specific transition between 2 subsequent phases in the cell cycle. Required for both activation and complex formation of CDK1/cyclin-B during G2-M transition, and for activation of CDK2/cyclins during G1-S transition (but not complex formation). CDK7 is the catalytic subunit of the CDK-activating kinase (CAK) complex. Phosphorylates SPT5/SUPT5H, SF1/NR5A1, POLR2A, p53/TP53, CDK1, CDK2, CDK4, CDK6 and CDK11B/CDK11. Initiates transcription by RNA polymerase II by mediating phosphorylation of POLR2A at 'Ser-5' of the repetitive C-terminal domain (CTD) when POLR2A is in complex with DNA, promoting dissociation from DNA and initiation. CAK activates the cyclin-associated kinases CDK1, CDK2, CDK4 and CDK6 by threonine phosphorylation, thus regulating cell cycle progression. CAK complexed to the core-TFIIH basal transcription factor activates RNA polymerase II by serine phosphorylation of the CTD of POLR2A, allowing its escape from the promoter and elongation of the transcripts. Its expression and activity are constant throughout the cell cycle. Upon DNA damage, triggers p53/TP53 activation by phosphorylation, but is inactivated in turn by p53/TP53; this feedback loop may lead to an arrest of the cell cycle and of the transcription, helping in cell recovery, or to apoptosis. Required for DNA-bound peptides-mediated transcription and cellular growth inhibition. The sequence is that of Cyclin-dependent kinase 7 (Cdk7) from Rattus norvegicus (Rat).